A 371-amino-acid chain; its full sequence is tRNA-specific 2-thiouridylase MnmA (371 aa).

ATP contacts are provided by residues 16–23 and methionine 42; that span reads GMSGGVDS. Residues 102-104 are interaction with target base in tRNA; sequence NPD. The Nucleophile role is filled by cysteine 107. An intrachain disulfide couples cysteine 107 to cysteine 204. Glycine 132 serves as a coordination point for ATP. The segment at 154–156 is interaction with tRNA; that stretch reads KDQ. The active-site Cysteine persulfide intermediate is the cysteine 204. The segment at 316–317 is interaction with tRNA; that stretch reads RY.

Belongs to the MnmA/TRMU family.

Its subcellular location is the cytoplasm. The enzyme catalyses S-sulfanyl-L-cysteinyl-[protein] + uridine(34) in tRNA + AH2 + ATP = 2-thiouridine(34) in tRNA + L-cysteinyl-[protein] + A + AMP + diphosphate + H(+). In terms of biological role, catalyzes the 2-thiolation of uridine at the wobble position (U34) of tRNA, leading to the formation of s(2)U34. The polypeptide is tRNA-specific 2-thiouridylase MnmA (Shewanella pealeana (strain ATCC 700345 / ANG-SQ1)).